The following is a 235-amino-acid chain: Small ribosomal subunit protein eS4 (235 aa).

One can recognise an S4 RNA-binding domain in the interval 43–114; the sequence is IPLLLIVRDM…DPHRFLRLIE (72 aa).

This sequence belongs to the eukaryotic ribosomal protein eS4 family.

The polypeptide is Small ribosomal subunit protein eS4 (Korarchaeum cryptofilum (strain OPF8)).